Reading from the N-terminus, the 153-residue chain is 6,7-dimethyl-8-ribityllumazine synthase (153 aa).

Residues tryptophan 22, 56 to 58 (SYE), and 80 to 82 (AVI) contribute to the 5-amino-6-(D-ribitylamino)uracil site. 85-86 (AT) contacts (2S)-2-hydroxy-3-oxobutyl phosphate. Histidine 88 (proton donor) is an active-site residue. Leucine 113 contributes to the 5-amino-6-(D-ribitylamino)uracil binding site. Arginine 127 contacts (2S)-2-hydroxy-3-oxobutyl phosphate.

Belongs to the DMRL synthase family.

The enzyme catalyses (2S)-2-hydroxy-3-oxobutyl phosphate + 5-amino-6-(D-ribitylamino)uracil = 6,7-dimethyl-8-(1-D-ribityl)lumazine + phosphate + 2 H2O + H(+). It participates in cofactor biosynthesis; riboflavin biosynthesis; riboflavin from 2-hydroxy-3-oxobutyl phosphate and 5-amino-6-(D-ribitylamino)uracil: step 1/2. Functionally, catalyzes the formation of 6,7-dimethyl-8-ribityllumazine by condensation of 5-amino-6-(D-ribitylamino)uracil with 3,4-dihydroxy-2-butanone 4-phosphate. This is the penultimate step in the biosynthesis of riboflavin. The protein is 6,7-dimethyl-8-ribityllumazine synthase of Herpetosiphon aurantiacus (strain ATCC 23779 / DSM 785 / 114-95).